The primary structure comprises 220 residues: Endonuclease NucS (220 aa).

This sequence belongs to the NucS endonuclease family.

It localises to the cytoplasm. In terms of biological role, cleaves both 3' and 5' ssDNA extremities of branched DNA structures. The protein is Endonuclease NucS of Parafrankia sp. (strain EAN1pec).